Here is a 118-residue protein sequence, read N- to C-terminus: V-type proton ATPase subunit G 1 (118 aa).

A2 is subject to N-acetylalanine.

This sequence belongs to the V-ATPase G subunit family. In terms of assembly, V-ATPase is a heteromultimeric enzyme made up of two complexes: the ATP-hydrolytic V1 complex and the proton translocation V0 complex. The V1 complex consists of three catalytic AB heterodimers that form a heterohexamer, three peripheral stalks each consisting of EG heterodimers, one central rotor including subunits D and F, and the regulatory subunits C and H. The proton translocation complex V0 consists of the proton transport subunit a, a ring of proteolipid subunits c9c'', rotary subunit d, subunits e and f, and the accessory subunits ATP6AP1/Ac45 and ATP6AP2/PRR. Kidney; localizes to early distal nephron, encompassing thick ascending limbs and distal convoluted tubules (at protein level). Ubiquitous.

The protein resides in the apical cell membrane. Subunit of the V1 complex of vacuolar(H+)-ATPase (V-ATPase), a multisubunit enzyme composed of a peripheral complex (V1) that hydrolyzes ATP and a membrane integral complex (V0) that translocates protons. V-ATPase is responsible for acidifying and maintaining the pH of intracellular compartments and in some cell types, is targeted to the plasma membrane, where it is responsible for acidifying the extracellular environment. In aerobic conditions, involved in intracellular iron homeostasis, thus triggering the activity of Fe(2+) prolyl hydroxylase (PHD) enzymes, and leading to HIF1A hydroxylation and subsequent proteasomal degradation. This is V-type proton ATPase subunit G 1 (ATP6V1G1) from Homo sapiens (Human).